A 418-amino-acid polypeptide reads, in one-letter code: Voltage-gated ClC-type chloride channel ClcB (418 aa).

A run of 10 helical transmembrane segments spans residues 5-25 (LLIATVVGILAAFAVAGFRHA), 54-74 (LLTPALGGLAAGLLLMGWQKF), 146-166 (LWIACGAAAGMAAAYRAPLAG), 168-188 (LFIAEVLFGTMMLASLGPVII), 222-242 (ALIISTGVLAGLCGPLLLTLM), 258-278 (WQLALGGVIVGLLSLFTPAVW), 291-311 (APPLLMIIAGIFLCKLCAVLA), 316-336 (GAPGGVFTPTLFIGLAIGMLY), 352-372 (LLLGLTEMATLLAATTHAPIM), and 380-400 (MTGEYQLLPGLLIACVIASVI).

The protein belongs to the chloride channel (TC 2.A.49) family. ClcB subfamily.

The protein resides in the cell inner membrane. Its function is as follows. Probably acts as an electrical shunt for an outwardly-directed proton pump that is linked to amino acid decarboxylation, as part of the extreme acid resistance (XAR) response. In Shigella boydii serotype 18 (strain CDC 3083-94 / BS512), this protein is Voltage-gated ClC-type chloride channel ClcB.